Consider the following 286-residue polypeptide: ATP synthase gamma chain (286 aa).

Belongs to the ATPase gamma chain family. In terms of assembly, F-type ATPases have 2 components, CF(1) - the catalytic core - and CF(0) - the membrane proton channel. CF(1) has five subunits: alpha(3), beta(3), gamma(1), delta(1), epsilon(1). CF(0) has three main subunits: a, b and c.

Its subcellular location is the cell inner membrane. In terms of biological role, produces ATP from ADP in the presence of a proton gradient across the membrane. The gamma chain is believed to be important in regulating ATPase activity and the flow of protons through the CF(0) complex. The chain is ATP synthase gamma chain from Fuscovulum blasticum (Rhodobacter blasticus).